A 504-amino-acid chain; its full sequence is Glycerol kinase (504 aa).

Thr-14 contributes to the ADP binding site. Thr-14, Thr-15, and Ser-16 together coordinate ATP. Thr-14 is a sn-glycerol 3-phosphate binding site. ADP is bound at residue Arg-18. Residues Arg-84, Glu-85, Tyr-136, and Asp-246 each contribute to the sn-glycerol 3-phosphate site. Glycerol-binding residues include Arg-84, Glu-85, Tyr-136, Asp-246, and Gln-247. Residues Thr-268 and Gly-311 each coordinate ADP. Positions 268, 311, 315, and 412 each coordinate ATP. ADP contacts are provided by Gly-412 and Asn-416.

The protein belongs to the FGGY kinase family.

The catalysed reaction is glycerol + ATP = sn-glycerol 3-phosphate + ADP + H(+). Its pathway is polyol metabolism; glycerol degradation via glycerol kinase pathway; sn-glycerol 3-phosphate from glycerol: step 1/1. With respect to regulation, inhibited by fructose 1,6-bisphosphate (FBP). In terms of biological role, key enzyme in the regulation of glycerol uptake and metabolism. Catalyzes the phosphorylation of glycerol to yield sn-glycerol 3-phosphate. This chain is Glycerol kinase, found in Aliivibrio fischeri (strain ATCC 700601 / ES114) (Vibrio fischeri).